The following is a 465-amino-acid chain: Chromosomal replication initiator protein DnaA (465 aa).

A domain I, interacts with DnaA modulators region spans residues 1–72; sequence MRTKQLWQVA…ETLSLLLGRP (72 aa). Residues 72–117 are domain II; the sequence is PIAVHFTVHGQDDEEHPVQRRPQRRALASEEGSASKQLSLTPSPEH. The interval 80–118 is disordered; it reads HGQDDEEHPVQRRPQRRALASEEGSASKQLSLTPSPEHG. The span at 103–113 shows a compositional bias: polar residues; it reads GSASKQLSLTP. The domain III, AAA+ region stretch occupies residues 118-334; the sequence is GLNPRYTFEK…GALNRIVALA (217 aa). ATP is bound by residues glycine 162, glycine 164, lysine 165, and threonine 166. A domain IV, binds dsDNA region spans residues 335 to 465; it reads QLTHQPITLA…DAKAPLASRH (131 aa).

Belongs to the DnaA family. Oligomerizes as a right-handed, spiral filament on DNA at oriC.

The protein localises to the cytoplasm. In terms of biological role, plays an essential role in the initiation and regulation of chromosomal replication. ATP-DnaA binds to the origin of replication (oriC) to initiate formation of the DNA replication initiation complex once per cell cycle. Binds the DnaA box (a 9 base pair repeat at the origin) and separates the double-stranded (ds)DNA. Forms a right-handed helical filament on oriC DNA; dsDNA binds to the exterior of the filament while single-stranded (ss)DNA is stabiized in the filament's interior. The ATP-DnaA-oriC complex binds and stabilizes one strand of the AT-rich DNA unwinding element (DUE), permitting loading of DNA polymerase. After initiation quickly degrades to an ADP-DnaA complex that is not apt for DNA replication. Binds acidic phospholipids. This Thermomicrobium roseum (strain ATCC 27502 / DSM 5159 / P-2) protein is Chromosomal replication initiator protein DnaA.